We begin with the raw amino-acid sequence, 294 residues long: MKLLTTGKVKDVYDDGDTLVFKFSNRISVFDKIIPNEIDNKGESLCRTSAFWFQLIESYGMKSHFIELIDNRTMRVRKFAVPNKVSLGSSNYVIPLEFITRYYVAGSLYDRIKEGKVKPMDIGLKHVPEYGEKLIDPIFEATTKREETDRLLTKKEAMEIGGLTLEDYCEIMEAVFKIDRRIDMEVSKRGLIHADGKKEIALDRERRIVVVDTFGTADEDRFWDEKEYDNGRVVELSKEMVRQYYRSIGYHDKLYYARENGLPEPDIPALSDDMVSKVSDLYRMMFEKITGQKW.

This sequence belongs to the SAICAR synthetase family.

It carries out the reaction 5-amino-1-(5-phospho-D-ribosyl)imidazole-4-carboxylate + L-aspartate + ATP = (2S)-2-[5-amino-1-(5-phospho-beta-D-ribosyl)imidazole-4-carboxamido]succinate + ADP + phosphate + 2 H(+). It functions in the pathway purine metabolism; IMP biosynthesis via de novo pathway; 5-amino-1-(5-phospho-D-ribosyl)imidazole-4-carboxamide from 5-amino-1-(5-phospho-D-ribosyl)imidazole-4-carboxylate: step 1/2. This chain is Phosphoribosylaminoimidazole-succinocarboxamide synthase, found in Thermoplasma volcanium (strain ATCC 51530 / DSM 4299 / JCM 9571 / NBRC 15438 / GSS1).